Consider the following 214-residue polypeptide: Cytochrome c biogenesis ATP-binding export protein CcmA (214 aa).

The 203-residue stretch at 12–214 (LAAHALAFSR…TRMLTLEAAA (203 aa)) folds into the ABC transporter domain. 44-51 (GDNGAGKT) contacts ATP.

This sequence belongs to the ABC transporter superfamily. CcmA exporter (TC 3.A.1.107) family. In terms of assembly, the complex is composed of two ATP-binding proteins (CcmA) and two transmembrane proteins (CcmB).

The protein resides in the cell inner membrane. It carries out the reaction heme b(in) + ATP + H2O = heme b(out) + ADP + phosphate + H(+). Its function is as follows. Part of the ABC transporter complex CcmAB involved in the biogenesis of c-type cytochromes; once thought to export heme, this seems not to be the case, but its exact role is uncertain. Responsible for energy coupling to the transport system. The sequence is that of Cytochrome c biogenesis ATP-binding export protein CcmA from Xanthomonas oryzae pv. oryzae (strain MAFF 311018).